Consider the following 609-residue polypeptide: Sterol O-acyltransferase 2 (609 aa).

Residues 1 to 15 (MGRTNTSDQLNAISD) are compositionally biased toward polar residues. The tract at residues 1–41 (MGRTNTSDQLNAISDKNTKRKSLALDNEYHNNSSSEDDSSK) is disordered. Transmembrane regions (helical) follow at residues 152-172 (FFGMYVLFWLATAFAMVNNLI), 195-215 (LFKVGLVDLAMYLSTYFAFFV), 229-249 (VGWWLQAAFDGLFLFFWLWIA), 253-273 (CLDFPWIAKVFLVLHSLVFIM), 402-422 (WSYVFGKTFGIFGLIFLMILI), and 451-471 (FLLMDMIPPFLMVYLFTFFLI). An FYXDWWN motif motif is present at residues 490–496 (FYGPWWS). The next 2 membrane-spanning stretches (helical) occupy residues 534-554 (AAIITFLLSSLVHELVMYVIF) and 589-609 (IICWFGFISGPSIICTLYLVF). Histidine 546 is an active-site residue.

This sequence belongs to the membrane-bound acyltransferase family. Sterol o-acyltransferase subfamily.

Its subcellular location is the endoplasmic reticulum membrane. Inhibited by the protoberberine derivative HWY-289 in a non-competitive manner. Inhibited by miconazole. Not inhibited by CI-976, polyoxin D, amphotericin B or nikkomycin Z. Its function is as follows. Sterol O-acyltransferase that catalyzes the formation of stery esters. The polypeptide is Sterol O-acyltransferase 2 (Candida albicans (Yeast)).